Consider the following 129-residue polypeptide: Small ribosomal subunit protein uS9 (129 aa).

It belongs to the universal ribosomal protein uS9 family.

This chain is Small ribosomal subunit protein uS9, found in Chlorobium chlorochromatii (strain CaD3).